The following is a 146-amino-acid chain: Hemoglobin subunit beta-2 (146 aa).

In terms of domain architecture, Globin spans 2–146; that stretch reads HWSAEEKQLI…VAHALARRYH (145 aa). Histidine 63 and histidine 92 together coordinate heme b.

It belongs to the globin family. As to quaternary structure, heterotetramer of two alpha chains and two beta chains. Red blood cells.

Functionally, involved in oxygen transport from the lung to the various peripheral tissues. This chain is Hemoglobin subunit beta-2 (HBB2), found in Naja naja (Indian cobra).